Consider the following 715-residue polypeptide: Scinderin (715 aa).

An actin-severing region spans residues 1-363 (MARELYHEEF…DGFGKVYVTE (363 aa)). The stretch at 27-76 (LELVPVPQSAHGDFYVGDAYLVLHTAKTSRGFTYHLHFWLGKECSQDEST) is one Gelsolin-like 1 repeat. A Phosphotyrosine modification is found at Tyr-102. A 1,2-diacyl-sn-glycero-3-phospho-(1D-myo-inositol-4,5-bisphosphate) is bound by residues 112–119 (KGGLKYKA) and 138–146 (RLLHVKGRR). Gelsolin-like repeat units follow at residues 148 to 188 (VRAT…YERL), 265 to 307 (VVAE…QERK), 398 to 451 (VEIW…DELT), and 523 to 564 (TRIV…EEEK). Residues 364 to 715 (KVAQIKQIPF…WFLGWDSSKW (352 aa)) form a ca(2+)-dependent actin binding region. Positions 538, 539, and 562 each coordinate Ca(2+). Phosphotyrosine is present on Tyr-599. The stretch at 626–668 (FVIEEIPGEFTQDDLAEDDVMLLDAWEQIFIWIGKDANEVEKK) is one Gelsolin-like 6 repeat. Residues Asp-643, Asp-644, and Glu-666 each coordinate Ca(2+).

This sequence belongs to the villin/gelsolin family. As to expression, expressed in megakaryocytes.

The protein localises to the cytoplasm. It is found in the cytoskeleton. Its subcellular location is the cell projection. The protein resides in the podosome. Functionally, ca(2+)-dependent actin filament-severing protein that has a regulatory function in exocytosis by affecting the organization of the microfilament network underneath the plasma membrane. Severing activity is inhibited by phosphatidylinositol 4,5-bis-phosphate (PIP2). In vitro, also has barbed end capping and nucleating activities in the presence of Ca(2+). Required for megakaryocyte differentiation, maturation, polyploidization and apoptosis with the release of platelet-like particles. Plays a role in osteoclastogenesis (OCG) and actin cytoskeletal organization in osteoclasts. Regulates chondrocyte proliferation and differentiation. Inhibits cell proliferation and tumorigenesis. Signaling is mediated by MAPK, p38 and JNK pathways. In Homo sapiens (Human), this protein is Scinderin.